An 80-amino-acid chain; its full sequence is Toxin-like peptide AaF1CA1 (80 aa).

The first 22 residues, 1–22, serve as a signal peptide directing secretion; it reads MMKLVLFSVIVILFSLIGSIHG. In terms of domain architecture, LCN-type CS-alpha/beta spans 25-80; it reads VPGNYPLRPFRYRYGCAVPGDSDYCVRVCRKHGVRYGYCWFFTCWCEYLEDKNIKI. 3 cysteine pairs are disulfide-bonded: C40–C63, C49–C68, and C53–C70.

This sequence belongs to the long (3 C-C) scorpion toxin superfamily. In terms of tissue distribution, expressed by the venom gland.

It localises to the secreted. Its function is as follows. Probable ion channel inhibitor. The protein is Toxin-like peptide AaF1CA1 of Androctonus australis (Sahara scorpion).